A 172-amino-acid polypeptide reads, in one-letter code: Large ribosomal subunit protein uL10 (172 aa).

The protein belongs to the universal ribosomal protein uL10 family. Part of the ribosomal stalk of the 50S ribosomal subunit. The N-terminus interacts with L11 and the large rRNA to form the base of the stalk. The C-terminus forms an elongated spine to which L12 dimers bind in a sequential fashion forming a multimeric L10(L12)X complex.

Its function is as follows. Forms part of the ribosomal stalk, playing a central role in the interaction of the ribosome with GTP-bound translation factors. In Bartonella bacilliformis (strain ATCC 35685 / KC583 / Herrer 020/F12,63), this protein is Large ribosomal subunit protein uL10.